We begin with the raw amino-acid sequence, 555 residues long: Beta-fructofuranosidase, cell wall isozyme (555 aa).

The first 22 residues, 1 to 22 (MAISSIFLLSLFSLIYVIPIEA), serve as a signal peptide directing secretion. Substrate contacts are provided by residues 58-61 (WIND), Q77, W85, and 120-121 (WS). Residue D61 is part of the active site. D140 is an active-site residue. Residues N154 and N181 are each glycosylated (N-linked (GlcNAc...) asparagine). Substrate contacts are provided by residues 186-187 (RD), E241, and D277. N337 carries an N-linked (GlcNAc...) asparagine glycan. A disulfide bridge connects residues C435 and C481.

The protein belongs to the glycosyl hydrolase 32 family.

The catalysed reaction is Hydrolysis of terminal non-reducing beta-D-fructofuranoside residues in beta-D-fructofuranosides.. The protein is Beta-fructofuranosidase, cell wall isozyme (BFRUCT1) of Pisum sativum (Garden pea).